The chain runs to 226 residues: Deoxyribose-phosphate aldolase (226 aa).

The active-site Proton donor/acceptor is the Asp-84. Lys-146 serves as the catalytic Schiff-base intermediate with acetaldehyde. The active-site Proton donor/acceptor is Lys-188.

This sequence belongs to the DeoC/FbaB aldolase family. DeoC type 1 subfamily. Homodimer.

The protein localises to the cytoplasm. The enzyme catalyses 2-deoxy-D-ribose 5-phosphate = D-glyceraldehyde 3-phosphate + acetaldehyde. The protein operates within carbohydrate degradation; 2-deoxy-D-ribose 1-phosphate degradation; D-glyceraldehyde 3-phosphate and acetaldehyde from 2-deoxy-alpha-D-ribose 1-phosphate: step 2/2. Functionally, catalyzes a reversible aldol reaction between acetaldehyde and D-glyceraldehyde 3-phosphate to generate 2-deoxy-D-ribose 5-phosphate. In Pyrobaculum aerophilum (strain ATCC 51768 / DSM 7523 / JCM 9630 / CIP 104966 / NBRC 100827 / IM2), this protein is Deoxyribose-phosphate aldolase.